The primary structure comprises 264 residues: Taurine import ATP-binding protein TauB (264 aa).

Residues 4–233 (LQLERISAQY…RYAAGESARA (230 aa)) form the ABC transporter domain. 38–45 (GPSGSGKT) is an ATP binding site.

It belongs to the ABC transporter superfamily. Taurine importer (TC 3.A.1.17.1) family. In terms of assembly, the complex is composed of two ATP-binding proteins (TauB), two transmembrane proteins (TauC) and a solute-binding protein (TauA).

Its subcellular location is the cell inner membrane. It carries out the reaction taurine(out) + ATP + H2O = taurine(in) + ADP + phosphate + H(+). Functionally, part of the ABC transporter complex TauABC involved in taurine import. Responsible for energy coupling to the transport system. The chain is Taurine import ATP-binding protein TauB from Pseudomonas fluorescens (strain ATCC BAA-477 / NRRL B-23932 / Pf-5).